Here is a 606-residue protein sequence, read N- to C-terminus: Kelch-like protein 41 (606 aa).

Position 3 is a phosphoserine (serine 3). Positions 33 to 100 (IDCTLKAGDK…LYSASIDLND (68 aa)) constitute a BTB domain. Residues 135 to 237 (CLAILRLGLL…AEKYFKDHVE (103 aa)) enclose the BACK domain. 5 Kelch repeats span residues 346-398 (QVYV…EVDD), 399-447 (KIYV…SHNG), 448-495 (MIYC…IHKG), 497-542 (IVIA…SLAG), and 544-599 (LYAI…TRLN).

Interacts with NRAP. Part of a complex that contains CUL3, RBX1 and KLHL41. Interacts with LASP1. In terms of processing, ubiquitinated by E3 ubiquitin ligase complex formed by CUL3 and RBX1 and probably targeted for proteasome-independent degradation. Quinone-induced oxidative stress increases its ubiquitination. In terms of tissue distribution, skeletal muscle. Localized between laterally fusing myofibrils in skeletal muscle (at protein level). Expressed at a lower level in the heart compared to skeletal muscle.

Its subcellular location is the cytoplasm. The protein resides in the cytoskeleton. It localises to the cell projection. It is found in the pseudopodium. The protein localises to the ruffle. Its subcellular location is the myofibril. The protein resides in the sarcomere. It localises to the m line. It is found in the sarcoplasmic reticulum membrane. The protein localises to the endoplasmic reticulum membrane. In terms of biological role, involved in skeletal muscle development and differentiation. Regulates proliferation and differentiation of myoblasts and plays a role in myofibril assembly by promoting lateral fusion of adjacent thin fibrils into mature, wide myofibrils. Required for pseudopod elongation in transformed cells. This chain is Kelch-like protein 41 (Klhl41), found in Mus musculus (Mouse).